The following is a 249-amino-acid chain: MKAIKNKGQDKTMNETTHRFARLVDLSAVQATSTEADVRACAELAARYNIISVHVLPCWTRFLSTLLPQQGTGEVMIGGPVGFPGGGHTTDTKVQEVRQLIADGAREVDMVVNIGKVLSGDYDYVREDLRRVVEAAAPVPAKVILETHYLNEEQIRRVCEIAVEVGMKWVKTSTGWAPTGATVEKVRIIADQLKGRIDIKGAGGIRDLATVRALYQLGVRRFGMSHGAVTKVLAELEQHPERFPELNAD.

Asp109 acts as the Proton donor/acceptor in catalysis. Lys171 (schiff-base intermediate with acetaldehyde) is an active-site residue. The active-site Proton donor/acceptor is the Lys200.

It belongs to the DeoC/FbaB aldolase family. DeoC type 1 subfamily.

The protein localises to the cytoplasm. It catalyses the reaction 2-deoxy-D-ribose 5-phosphate = D-glyceraldehyde 3-phosphate + acetaldehyde. The protein operates within carbohydrate degradation; 2-deoxy-D-ribose 1-phosphate degradation; D-glyceraldehyde 3-phosphate and acetaldehyde from 2-deoxy-alpha-D-ribose 1-phosphate: step 2/2. Catalyzes a reversible aldol reaction between acetaldehyde and D-glyceraldehyde 3-phosphate to generate 2-deoxy-D-ribose 5-phosphate. The protein is Deoxyribose-phosphate aldolase of Klebsiella pneumoniae subsp. pneumoniae (strain ATCC 700721 / MGH 78578).